The following is a 327-amino-acid chain: Beta-ketoacyl-[acyl-carrier-protein] synthase III (327 aa).

Residues C114 and H254 contribute to the active site. Residues 255–259 (QANQR) are ACP-binding. N284 is an active-site residue.

It belongs to the thiolase-like superfamily. FabH family. Homodimer.

The protein localises to the cytoplasm. It catalyses the reaction malonyl-[ACP] + acetyl-CoA + H(+) = 3-oxobutanoyl-[ACP] + CO2 + CoA. It functions in the pathway lipid metabolism; fatty acid biosynthesis. Its function is as follows. Catalyzes the condensation reaction of fatty acid synthesis by the addition to an acyl acceptor of two carbons from malonyl-ACP. Catalyzes the first condensation reaction which initiates fatty acid synthesis and may therefore play a role in governing the total rate of fatty acid production. Possesses both acetoacetyl-ACP synthase and acetyl transacylase activities. Its substrate specificity determines the biosynthesis of branched-chain and/or straight-chain of fatty acids. This chain is Beta-ketoacyl-[acyl-carrier-protein] synthase III, found in Levilactobacillus brevis (strain ATCC 367 / BCRC 12310 / CIP 105137 / JCM 1170 / LMG 11437 / NCIMB 947 / NCTC 947) (Lactobacillus brevis).